The chain runs to 808 residues: Ribosome biogenesis protein BOP1 homolog (808 aa).

Positions 1–56 (MTSPKGKPSPKRSAPAPTTAALTPRTEERTEGATSSASASASSHISSSFDSPRDDT) are disordered. Low complexity-rich tracts occupy residues 12–24 (RSAP…ALTP) and 33–50 (ATSS…SSFD). 5 WD repeats span residues 430-469 (GHTA…LMKR), 640-680 (KFSE…RRFK), 682-720 (SGGV…KPYK), 724-766 (SHRG…DYNK), and 777-808 (KHQR…AWTE).

The protein belongs to the WD repeat BOP1/ERB1 family.

It localises to the nucleus. It is found in the nucleolus. The protein localises to the nucleoplasm. In terms of biological role, required for maturation of ribosomal RNAs and formation of the large ribosomal subunit. This is Ribosome biogenesis protein BOP1 homolog from Leishmania infantum.